Here is a 438-residue protein sequence, read N- to C-terminus: Thymidine phosphorylase (438 aa).

Belongs to the thymidine/pyrimidine-nucleoside phosphorylase family. As to quaternary structure, homodimer.

The catalysed reaction is thymidine + phosphate = 2-deoxy-alpha-D-ribose 1-phosphate + thymine. It participates in pyrimidine metabolism; dTMP biosynthesis via salvage pathway; dTMP from thymine: step 1/2. Functionally, the enzymes which catalyze the reversible phosphorolysis of pyrimidine nucleosides are involved in the degradation of these compounds and in their utilization as carbon and energy sources, or in the rescue of pyrimidine bases for nucleotide synthesis. The polypeptide is Thymidine phosphorylase (Sinorhizobium fredii (strain NBRC 101917 / NGR234)).